Here is a 227-residue protein sequence, read N- to C-terminus: Lipoprotein-releasing system ATP-binding protein LolD (227 aa).

The region spanning isoleucine 8–threonine 226 is the ABC transporter domain. Residue glycine 44–threonine 51 coordinates ATP.

The protein belongs to the ABC transporter superfamily. Lipoprotein translocase (TC 3.A.1.125) family. As to quaternary structure, the complex is composed of two ATP-binding proteins (LolD) and two transmembrane proteins (LolC and LolE).

It is found in the cell inner membrane. Its function is as follows. Part of the ABC transporter complex LolCDE involved in the translocation of mature outer membrane-directed lipoproteins, from the inner membrane to the periplasmic chaperone, LolA. Responsible for the formation of the LolA-lipoprotein complex in an ATP-dependent manner. The sequence is that of Lipoprotein-releasing system ATP-binding protein LolD from Syntrophotalea carbinolica (strain DSM 2380 / NBRC 103641 / GraBd1) (Pelobacter carbinolicus).